The following is a 252-amino-acid chain: Outer membrane protein P1 (252 aa).

Positions 1–23 (METTTKLAIGVSALCCLASAAFA) are cleaved as a signal peptide.

This sequence belongs to the Coxiella porin P1 (CPP1) (TC 1.B.43) family. In terms of assembly, may form trimers.

Its subcellular location is the cell outer membrane. Its function is as follows. Able to form a pore in lipid bilayers. The polypeptide is Outer membrane protein P1 (ompP1) (Coxiella burnetii (strain RSA 493 / Nine Mile phase I)).